Reading from the N-terminus, the 306-residue chain is 33 kDa chaperonin (306 aa).

Disulfide bonds link Cys242–Cys244 and Cys275–Cys278.

Belongs to the HSP33 family. Post-translationally, under oxidizing conditions two disulfide bonds are formed involving the reactive cysteines. Under reducing conditions zinc is bound to the reactive cysteines and the protein is inactive.

It localises to the cytoplasm. Functionally, redox regulated molecular chaperone. Protects both thermally unfolding and oxidatively damaged proteins from irreversible aggregation. Plays an important role in the bacterial defense system toward oxidative stress. This chain is 33 kDa chaperonin, found in Gloeobacter violaceus (strain ATCC 29082 / PCC 7421).